Consider the following 275-residue polypeptide: Probable endonuclease 4 (275 aa).

His-66, His-106, Glu-140, Asp-172, His-175, His-209, Asp-222, His-224, and Glu-254 together coordinate Zn(2+).

It belongs to the AP endonuclease 2 family. Requires Zn(2+) as cofactor.

It catalyses the reaction Endonucleolytic cleavage to 5'-phosphooligonucleotide end-products.. In terms of biological role, endonuclease IV plays a role in DNA repair. It cleaves phosphodiester bonds at apurinic or apyrimidinic (AP) sites, generating a 3'-hydroxyl group and a 5'-terminal sugar phosphate. The chain is Probable endonuclease 4 from Halobacterium salinarum (strain ATCC 29341 / DSM 671 / R1).